We begin with the raw amino-acid sequence, 144 residues long: Mediator of RNA polymerase II transcription subunit 9 (144 aa).

The stretch at 85-143 (QDCNHKIFELQKRFESAREQIRQLPGIDFNKEEQQQRLELLRNQLKLKQQLIRKYKDTE) forms a coiled coil.

Belongs to the Mediator complex subunit 9 family. In terms of assembly, component of the Mediator complex.

It is found in the nucleus. Component of the Mediator complex, a coactivator involved in the regulated transcription of nearly all RNA polymerase II-dependent genes. Mediator functions as a bridge to convey information from gene-specific regulatory proteins to the basal RNA polymerase II transcription machinery. Mediator is recruited to promoters by direct interactions with regulatory proteins and serves as a scaffold for the assembly of a functional preinitiation complex with RNA polymerase II and the general transcription factors. In Drosophila melanogaster (Fruit fly), this protein is Mediator of RNA polymerase II transcription subunit 9 (MED9).